The primary structure comprises 550 residues: Tyrosinase HcTyr2 (550 aa).

His-56, His-84, His-93, His-282, His-286, and His-326 together coordinate Cu cation.

Belongs to the tyrosinase family. Cu(2+) serves as cofactor.

It catalyses the reaction L-tyrosine + O2 = L-dopaquinone + H2O. It carries out the reaction 2 L-tyrosine + O2 = 2 L-dopa. The enzyme catalyses 2 L-dopa + O2 = 2 L-dopaquinone + 2 H2O. Its function is as follows. Copper-containing oxidase that catalyzes the conversion of L-tyrosine to L-dopa and then to L-dopaquinone. Can use various phenols such as p-coumaric acid, phenol, pyrocatechol, syringol or pyrogallol. Accepts several of the constituents of lignin and potentially participates in lignin functionalization. The protein is Tyrosinase HcTyr2 of Hahella sp. (strain CCB-MM4).